We begin with the raw amino-acid sequence, 237 residues long: Putative N-acetylmannosamine-6-phosphate 2-epimerase (237 aa).

This sequence belongs to the NanE family.

It catalyses the reaction an N-acyl-D-glucosamine 6-phosphate = an N-acyl-D-mannosamine 6-phosphate. It participates in amino-sugar metabolism; N-acetylneuraminate degradation; D-fructose 6-phosphate from N-acetylneuraminate: step 3/5. Functionally, converts N-acetylmannosamine-6-phosphate (ManNAc-6-P) to N-acetylglucosamine-6-phosphate (GlcNAc-6-P). The polypeptide is Putative N-acetylmannosamine-6-phosphate 2-epimerase (Listeria monocytogenes serotype 4a (strain HCC23)).